The sequence spans 264 residues: Teichoic acids export ATP-binding protein TagH (264 aa).

Residues 5-243 (VNIKNVTKEY…YEAFLNDFKK (239 aa)) form the ABC transporter domain. An ATP-binding site is contributed by 57-64 (GINGSGKS).

This sequence belongs to the ABC transporter superfamily. Teichoic acids exporter (TC 3.A.1.104.1) family. As to quaternary structure, the complex is composed of two ATP-binding proteins (TagH) and two transmembrane proteins (TagG).

It localises to the cell membrane. It carries out the reaction ATP + H2O + teichoic acidSide 1 = ADP + phosphate + teichoic acidSide 2.. In terms of biological role, part of the ABC transporter complex TagGH involved in teichoic acids export. Responsible for energy coupling to the transport system. The sequence is that of Teichoic acids export ATP-binding protein TagH from Staphylococcus aureus (strain USA300).